The sequence spans 413 residues: Tyrosine--tRNA ligase (413 aa).

Tyr-34 contacts L-tyrosine. A 'HIGH' region motif is present at residues 39–48 (CTAQSLHVGN). L-tyrosine contacts are provided by Tyr-171 and Gln-175. Positions 231-235 (KMGKT) match the 'KMSKS' region motif. Residue Lys-234 participates in ATP binding. An S4 RNA-binding domain is found at 346–411 (IPITELLVTI…GKKCHILVKI (66 aa)).

The protein belongs to the class-I aminoacyl-tRNA synthetase family. TyrS type 1 subfamily. Homodimer.

The protein resides in the cytoplasm. The catalysed reaction is tRNA(Tyr) + L-tyrosine + ATP = L-tyrosyl-tRNA(Tyr) + AMP + diphosphate + H(+). Its function is as follows. Catalyzes the attachment of tyrosine to tRNA(Tyr) in a two-step reaction: tyrosine is first activated by ATP to form Tyr-AMP and then transferred to the acceptor end of tRNA(Tyr). In Orientia tsutsugamushi (strain Ikeda) (Rickettsia tsutsugamushi), this protein is Tyrosine--tRNA ligase.